Reading from the N-terminus, the 867-residue chain is Putative ubiquitin thioesterase L96 (867 aa).

4 disordered regions span residues Val-49 to Asp-73, Ile-177 to Lys-204, Tyr-231 to Arg-271, and Leu-379 to Gly-591. Basic residues-rich tracts occupy residues Ser-234–Gly-258 and Lys-421–Arg-430. 2 stretches are compositionally biased toward low complexity: residues Pro-433 to Ala-462 and Pro-472 to Ser-551. A compositionally biased stretch (polar residues) spans Ile-565–Ser-575. Positions Arg-582–Gly-591 are enriched in basic and acidic residues. An OTU domain is found at Tyr-606–Leu-745. The active site involves Asp-614. The active-site Nucleophile is Cys-617. Residue His-738 is part of the active site.

The catalysed reaction is Thiol-dependent hydrolysis of ester, thioester, amide, peptide and isopeptide bonds formed by the C-terminal Gly of ubiquitin (a 76-residue protein attached to proteins as an intracellular targeting signal).. Hydrolase that can remove conjugated ubiquitin from proteins and may therefore play an important regulatory role at the level of protein turnover by preventing degradation. May be involved in TIV genomic DNA packaging in a manner related to the Gag polyproteins of the mammalian viruses. The polypeptide is Putative ubiquitin thioesterase L96 (Tipula iridescent virus (TIV)).